Consider the following 257-residue polypeptide: Ribonuclease HII (257 aa).

One can recognise an RNase H type-2 domain in the interval 72–257 (TYIAGIDEVG…FAPIKDMIKK (186 aa)). The a divalent metal cation site is built by Asp-78, Glu-79, and Asp-170.

It belongs to the RNase HII family. Requires Mn(2+) as cofactor. The cofactor is Mg(2+).

The protein resides in the cytoplasm. The catalysed reaction is Endonucleolytic cleavage to 5'-phosphomonoester.. Functionally, endonuclease that specifically degrades the RNA of RNA-DNA hybrids. This Bacillus anthracis (strain A0248) protein is Ribonuclease HII.